The primary structure comprises 137 residues: 6,7-dimethyl-8-ribityllumazine synthase (137 aa).

Residues Phe-11, 43-45 (SFD), and 67-69 (CVI) contribute to the 5-amino-6-(D-ribitylamino)uracil site. 72-73 (DT) serves as a coordination point for (2S)-2-hydroxy-3-oxobutyl phosphate. His-75 serves as the catalytic Proton donor. Residue Leu-100 participates in 5-amino-6-(D-ribitylamino)uracil binding. Residue Arg-115 participates in (2S)-2-hydroxy-3-oxobutyl phosphate binding.

Belongs to the DMRL synthase family. In terms of assembly, forms an icosahedral capsid composed of 60 subunits, arranged as a dodecamer of pentamers.

The catalysed reaction is (2S)-2-hydroxy-3-oxobutyl phosphate + 5-amino-6-(D-ribitylamino)uracil = 6,7-dimethyl-8-(1-D-ribityl)lumazine + phosphate + 2 H2O + H(+). Its pathway is cofactor biosynthesis; riboflavin biosynthesis; riboflavin from 2-hydroxy-3-oxobutyl phosphate and 5-amino-6-(D-ribitylamino)uracil: step 1/2. In terms of biological role, catalyzes the formation of 6,7-dimethyl-8-ribityllumazine by condensation of 5-amino-6-(D-ribitylamino)uracil with 3,4-dihydroxy-2-butanone 4-phosphate. This is the penultimate step in the biosynthesis of riboflavin. In Methanococcus maripaludis (strain DSM 14266 / JCM 13030 / NBRC 101832 / S2 / LL), this protein is 6,7-dimethyl-8-ribityllumazine synthase.